The chain runs to 47 residues: Photosystem II reaction center protein K (47 aa).

Positions M1 to A10 are excised as a propeptide. Residues F19 to V39 traverse the membrane as a helical segment.

It belongs to the PsbK family. PSII is composed of 1 copy each of membrane proteins PsbA, PsbB, PsbC, PsbD, PsbE, PsbF, PsbH, PsbI, PsbJ, PsbK, PsbL, PsbM, PsbT, PsbX, PsbY, PsbZ, Psb30/Ycf12, peripheral proteins PsbO, CyanoQ (PsbQ), PsbU, PsbV and a large number of cofactors. It forms dimeric complexes.

The protein localises to the cellular thylakoid membrane. Its function is as follows. One of the components of the core complex of photosystem II (PSII). PSII is a light-driven water:plastoquinone oxidoreductase that uses light energy to abstract electrons from H(2)O, generating O(2) and a proton gradient subsequently used for ATP formation. It consists of a core antenna complex that captures photons, and an electron transfer chain that converts photonic excitation into a charge separation. This Parasynechococcus marenigrum (strain WH8102) protein is Photosystem II reaction center protein K.